The chain runs to 120 residues: Ribonuclease P protein component (120 aa).

Belongs to the RnpA family. As to quaternary structure, consists of a catalytic RNA component (M1 or rnpB) and a protein subunit.

The catalysed reaction is Endonucleolytic cleavage of RNA, removing 5'-extranucleotides from tRNA precursor.. RNaseP catalyzes the removal of the 5'-leader sequence from pre-tRNA to produce the mature 5'-terminus. It can also cleave other RNA substrates such as 4.5S RNA. The protein component plays an auxiliary but essential role in vivo by binding to the 5'-leader sequence and broadening the substrate specificity of the ribozyme. The chain is Ribonuclease P protein component from Microcystis aeruginosa (strain NIES-843 / IAM M-2473).